The chain runs to 270 residues: Outer membrane protein P.IIC (270 aa).

The signal sequence occupies residues 1-25 (MQPAKNLLFSSLLFSSLLFSSAARA). Over 26–35 (ASEDGGRGPY) the chain is Extracellular. The chain crosses the membrane as a beta stranded span at residues 36–44 (VQADLAYAA). The Periplasmic portion of the chain corresponds to 45 to 76 (ERITHDYPKPTGTGKNKISTVSDYFRNIRTHS). Residues 77–85 (VHPRVSVGY) traverse the membrane as a beta stranded segment. Over 86–89 (DFGS) the chain is Extracellular. Residues 90 to 96 (WRIAADY) form a beta stranded membrane-spanning segment. The Periplasmic portion of the chain corresponds to 97 to 142 (ARYRKWNNNKYSVSIKELLRNDNSASGVRGHLNIQTQKTEHQENGT). Residues 143–157 (FHAVSSLGLSTIYDF) form a beta stranded membrane-spanning segment. Over 158–162 (DTGSR) the chain is Extracellular. Residues 163 to 173 (FKPYIGMRVAY) traverse the membrane as a beta stranded segment. Residues 174-221 (GHVRHQVRSVEQETEIITTYPSNGGGKVSLSSKMPPKSAHHQSNSIRR) lie on the Periplasmic side of the membrane. Residues 194–217 (PSNGGGKVSLSSKMPPKSAHHQSN) are disordered. Residues 222 to 234 (VGLGVIAGVGFDI) traverse the membrane as a beta stranded segment. The Extracellular portion of the chain corresponds to 235–237 (TPN). The chain crosses the membrane as a beta stranded span at residues 238 to 246 (LTLDTGYRY). Residues 247 to 261 (HNWGRLENTRFKTHE) lie on the Periplasmic side of the membrane. Residues 262–270 (ASLGMRYRF) traverse the membrane as a beta stranded segment.

Belongs to the opacity porin family. As to quaternary structure, homotrimer.

Its subcellular location is the cell outer membrane. In terms of biological role, this protein serves as a porin. This chain is Outer membrane protein P.IIC (piiC), found in Neisseria gonorrhoeae.